The primary structure comprises 317 residues: DNA-directed RNA polymerase subunit alpha (317 aa).

The segment at 1–229 is alpha N-terminal domain (alpha-NTD); that stretch reads MLNEFIYPDK…KHYELLENIF (229 aa). The interval 245-317 is alpha C-terminal domain (alpha-CTD); sequence AEKLSLSIEE…ELGMNIETQR (73 aa).

It belongs to the RNA polymerase alpha chain family. Homodimer. The RNAP catalytic core consists of 2 alpha, 1 beta, 1 beta' and 1 omega subunit. When a sigma factor is associated with the core the holoenzyme is formed, which can initiate transcription.

It carries out the reaction RNA(n) + a ribonucleoside 5'-triphosphate = RNA(n+1) + diphosphate. DNA-dependent RNA polymerase catalyzes the transcription of DNA into RNA using the four ribonucleoside triphosphates as substrates. The sequence is that of DNA-directed RNA polymerase subunit alpha from Aquifex aeolicus (strain VF5).